Consider the following 73-residue polypeptide: Sec-independent protein translocase protein TatA (73 aa).

Residues 1-21 (MGSFSIWHWMIVLVIVLLVFG) form a helical membrane-spanning segment.

Belongs to the TatA/E family. In terms of assembly, the Tat system comprises two distinct complexes: a TatABC complex, containing multiple copies of TatA, TatB and TatC subunits, and a separate TatA complex, containing only TatA subunits. Substrates initially bind to the TatABC complex, which probably triggers association of the separate TatA complex to form the active translocon.

The protein localises to the cell inner membrane. Part of the twin-arginine translocation (Tat) system that transports large folded proteins containing a characteristic twin-arginine motif in their signal peptide across membranes. TatA could form the protein-conducting channel of the Tat system. In Mesorhizobium japonicum (strain LMG 29417 / CECT 9101 / MAFF 303099) (Mesorhizobium loti (strain MAFF 303099)), this protein is Sec-independent protein translocase protein TatA.